The chain runs to 331 residues: Adenosine deaminase (331 aa).

Zn(2+)-binding residues include His-12 and His-14. His-14, Asp-16, and Gly-170 together coordinate substrate. His-197 serves as a coordination point for Zn(2+). The active-site Proton donor is the Glu-200. Asp-278 contributes to the Zn(2+) binding site.

The protein belongs to the metallo-dependent hydrolases superfamily. Adenosine and AMP deaminases family. Adenosine deaminase subfamily. Zn(2+) serves as cofactor.

It catalyses the reaction adenosine + H2O + H(+) = inosine + NH4(+). The catalysed reaction is 2'-deoxyadenosine + H2O + H(+) = 2'-deoxyinosine + NH4(+). Functionally, catalyzes the hydrolytic deamination of adenosine and 2-deoxyadenosine. This is Adenosine deaminase from Vibrio vulnificus (strain CMCP6).